Here is a 128-residue protein sequence, read N- to C-terminus: Large ribosomal subunit protein uL22 (128 aa).

It belongs to the universal ribosomal protein uL22 family. In terms of assembly, part of the 50S ribosomal subunit.

In terms of biological role, this protein binds specifically to 23S rRNA; its binding is stimulated by other ribosomal proteins, e.g. L4, L17, and L20. It is important during the early stages of 50S assembly. It makes multiple contacts with different domains of the 23S rRNA in the assembled 50S subunit and ribosome. Its function is as follows. The globular domain of the protein is located near the polypeptide exit tunnel on the outside of the subunit, while an extended beta-hairpin is found that lines the wall of the exit tunnel in the center of the 70S ribosome. The protein is Large ribosomal subunit protein uL22 of Prochlorococcus marinus (strain MIT 9312).